A 311-amino-acid polypeptide reads, in one-letter code: MLMPGLLNDPVLLLGLMAFGALLLALPLAFWNLSGEPRSSTSRVVQLLVVAANLLLTAQLLWRWLDSGHFPISNLYESLCFLAWGCTFTQLFVERSWPSPLVPAATTPMALVCVAFASFALPDTLQNAAPLVPALRSSWLVMHVSVIMMSYAALLVGSLLSAAVLFTQPGQAMELRSSSIGSGSFQKAGLQTDGGTVVLEAAPIALSERLDNLSYRTITVGFLLLTVGIISGAVWANEAWGSWWSWDPKETWALICWLVYAAYLHTRLSRGWQGRRPAWVAVSGLFVISVCYIGVNLLGIGLHSYGWFFDS.

8 helical membrane-spanning segments follow: residues 11 to 31 (VLLL…LAFW), 44 to 64 (VVQL…LWRW), 68 to 88 (GHFP…GCTF), 101 to 121 (LVPA…SFAL), 146 to 166 (VIMM…AVLF), 217 to 237 (TITV…VWAN), 251 to 268 (TWAL…HTRL), and 280 to 300 (VAVS…LLGI).

Belongs to the CcmF/CycK/Ccl1/NrfE/CcsA family. May interact with ccs1.

The protein resides in the cellular thylakoid membrane. Its function is as follows. Required during biogenesis of c-type cytochromes (cytochrome c6 and cytochrome f) at the step of heme attachment. This Synechococcus sp. (strain RCC307) protein is Cytochrome c biogenesis protein CcsA.